The chain runs to 373 residues: MFSKVLPFVGAVAALPHSVRQEPGSGIGYPYDNNTLPYVAPGPTDSRAPCPALNALANHGYIPHDGRAISRETLQNAFLNHMGIANSVIELALTNAFVVCEYVTGSDCGDSLVNLTLLAEPHAFEHDHSFSRKDYKQGVANSNDFIDNRNFDAETFQTSLDVVAGKTHFDYADMNEIRLQRESLSNELDFPGWFTESKPIQNVESGFIFALVSDFNLPDNDENPLVRIDWWKYWFTNESFPYHLGWHPPSPAREIEFVTSASSAVLAASVTSTPSSLPSGAIGPGAEAVPLSFASTMTPFLLATNAPYYAQDPTLGPNDKREAAPAATTSMAVFKNPYLEAIGTQDIKNQQAYVSSKAAAMASAMAANKARNL.

Residues 1-20 (MFSKVLPFVGAVAALPHSVR) form the signal peptide. Position 21 is a pyrrolidone carboxylic acid (Gln21). N-linked (GlcNAc...) asparagine glycosylation occurs at Asn33. Cys50 contacts heme. Residues Cys100 and Cys108 are joined by a disulfide bond. An N-linked (GlcNAc...) asparagine glycan is attached at Asn114. Mn(2+)-binding residues include Glu125, His126, and Ser129. Residue Glu204 is part of the active site. Asn237 is a glycosylation site (N-linked (GlcNAc...) asparagine). O-linked (Man) threonine glycosylation is present at Thr259. Residues Ser260, Ser262, Ser263, and Ser269 are each glycosylated (O-linked (Man) serine). O-linked (Man) threonine glycosylation occurs at Thr271. O-linked (Man) serine glycosylation occurs at Ser272. Thr273 carries O-linked (Man) threonine glycosylation. O-linked (Man...) threonine glycosylation is found at Thr296, Thr304, and Thr314. The propeptide occupies 322 to 373 (EAAPAATTSMAVFKNPYLEAIGTQDIKNQQAYVSSKAAAMASAMAANKARNL).

This sequence belongs to the chloroperoxidase family. Heme b is required as a cofactor. The cofactor is Mn(2+). In terms of processing, N- and O-glycosylated.

It catalyses the reaction RH + Cl(-) + H2O2 = RCl + 2 H2O.. Functionally, catalyzes peroxidative halogenations involved in the biosynthesis of clardariomycin (2,2-dichloro-1,3-cyclo-pentenedione). The enzyme also has potent catalase activity and in the absence of halide ion, acts as a peroxidase similar to plant peroxidases. This chain is Chloroperoxidase (CPO), found in Leptoxyphium fumago (Caldariomyces fumago).